The sequence spans 130 residues: D-ribose pyranase (130 aa).

H20 acts as the Proton donor in catalysis. Residues D28, H97, and 119-121 (YAN) contribute to the substrate site.

The protein belongs to the RbsD / FucU family. RbsD subfamily. Homodecamer.

The protein localises to the cytoplasm. It carries out the reaction beta-D-ribopyranose = beta-D-ribofuranose. The protein operates within carbohydrate metabolism; D-ribose degradation; D-ribose 5-phosphate from beta-D-ribopyranose: step 1/2. Catalyzes the interconversion of beta-pyran and beta-furan forms of D-ribose. This is D-ribose pyranase from Bacillus pumilus (strain SAFR-032).